The primary structure comprises 58 residues: Preprotein translocase subunit SecG (58 aa).

Topologically, residues 1–33 are cytoplasmic; it reads MARRKKYEGLNPFVAAGLIKFSEEGEMERIKLS. The chain crosses the membrane as a helical span at residues 34–55; it reads PKAAIAVSAAIIAALIIINLLL. At 56-58 the chain is on the extracellular side; it reads PPL.

The protein belongs to the SEC61-beta family. In terms of assembly, component of the protein translocase complex. Heterotrimer consisting of alpha (SecY), beta (SecG) and gamma (SecE) subunits. Can form oligomers of the heterotrimer.

It is found in the cell membrane. Involved in protein export. The function of the beta subunit is unknown, but it may be involved in stabilization of the trimeric complex. This Pyrobaculum arsenaticum (strain DSM 13514 / JCM 11321 / PZ6) protein is Preprotein translocase subunit SecG.